The sequence spans 350 residues: Enoyl-[acyl-carrier-protein] reductase, mitochondrial (350 aa).

The transit peptide at 1 to 14 (MNSTRNIISLVRRY) directs the protein to the mitochondrion. Catalysis depends on tyrosine 69, which acts as the Proton donor. NADP(+) is bound by residues asparagine 143, 169–172 (NSMV), 192–194 (RDG), 261–264 (YGGM), 286–288 (FWL), and lysine 343.

This sequence belongs to the zinc-containing alcohol dehydrogenase family. Quinone oxidoreductase subfamily. Homodimer.

It is found in the mitochondrion. It catalyses the reaction a 2,3-saturated acyl-[ACP] + NADP(+) = a (2E)-enoyl-[ACP] + NADPH + H(+). Its function is as follows. Catalyzes the NADPH-dependent reduction of trans-2-enoyl thioesters in mitochondrial fatty acid synthesis (fatty acid synthesis type II). Fatty acid chain elongation in mitochondria uses acyl carrier protein (ACP) as an acyl group carrier, but the enzyme accepts both ACP and CoA thioesters as substrates in vitro. This Dictyostelium discoideum (Social amoeba) protein is Enoyl-[acyl-carrier-protein] reductase, mitochondrial (mecr).